The following is a 490-amino-acid chain: Betaine aldehyde dehydrogenase (490 aa).

Asp93 serves as a coordination point for K(+). 150–152 (GAW) serves as a coordination point for NAD(+). Lys162 (charge relay system) is an active-site residue. Residue 176 to 179 (KPSE) coordinates NAD(+). Val180 provides a ligand contact to K(+). Position 230–233 (230–233 (GIAS)) interacts with NAD(+). Leu246 serves as a coordination point for K(+). Catalysis depends on Glu252, which acts as the Proton acceptor. NAD(+) is bound by residues Gly254, Cys286, and Glu387. Catalysis depends on Cys286, which acts as the Nucleophile. Cysteine sulfenic acid (-SOH) is present on Cys286. K(+) contacts are provided by Lys457 and Gly460. Glu464 serves as the catalytic Charge relay system.

This sequence belongs to the aldehyde dehydrogenase family. Dimer of dimers. Requires K(+) as cofactor.

The enzyme catalyses betaine aldehyde + NAD(+) + H2O = glycine betaine + NADH + 2 H(+). It functions in the pathway amine and polyamine biosynthesis; betaine biosynthesis via choline pathway; betaine from betaine aldehyde: step 1/1. Its function is as follows. Involved in the biosynthesis of the osmoprotectant glycine betaine. Catalyzes the irreversible oxidation of betaine aldehyde to the corresponding acid. This chain is Betaine aldehyde dehydrogenase, found in Yersinia pseudotuberculosis serotype I (strain IP32953).